A 992-amino-acid chain; its full sequence is Vacuolar membrane protease (992 aa).

Topologically, residues 1–24 (MSPAMANPRVRKFNPIAFTPLPVT) are cytoplasmic. A helical transmembrane segment spans residues 25–45 (FITTIVYLAVLILVLVTYLVV). Over 46–390 (PPAPTLEMSP…SAFAVFRLHT (345 aa)) the chain is Vacuolar. N-linked (GlcNAc...) asparagine glycans are attached at residues asparagine 59, asparagine 115, and asparagine 118. The Zn(2+) site is built by histidine 174 and aspartate 186. Glutamate 220 functions as the Proton acceptor in the catalytic mechanism. A Zn(2+)-binding site is contributed by glutamate 221. Asparagine 237 carries N-linked (GlcNAc...) asparagine glycosylation. Zn(2+)-binding residues include glutamate 246 and histidine 319. A helical membrane pass occupies residues 391 to 411 (LFALSVTLLVIGPLVLFITSI). Topologically, residues 412–446 (ALSKTDRMYLFSMSKSLGGASETVSLRGLRGLFRT) are cytoplasmic. Residues 447–467 (PIILTVTTVIPIGLAYLLEKI) traverse the membrane as a helical segment. Residues 468-474 (NPYIVHS) lie on the Vacuolar side of the membrane. A helical membrane pass occupies residues 475–495 (SQFAVWSMMLSVWIFVAWFLA). Over 496–508 (RVADFFRPSALHR) the chain is Cytoplasmic. A helical membrane pass occupies residues 509–529 (AYSYTWIFIVTWIMLVISTVY). At 530–533 (ANQK) the chain is on the vacuolar side. A helical membrane pass occupies residues 534–554 (GIAAGYFTFFYFAAVFLATWV). Residues 555–671 (SYLELFSLPR…WSWTLPRWTW (117 aa)) lie on the Cytoplasmic side of the membrane. A disordered region spans residues 579-620 (RSSSLSSRLLTPSADELPSDIGPNGAENVGDPDETDPTESTS). A helical membrane pass occupies residues 672–692 (ILQLLLLAPIVIILVGQVGLL). The Vacuolar portion of the chain corresponds to 693–708 (LTTAMSQIGSDGVSTF). The helical transmembrane segment at 709 to 729 (IVYLACALFSTLLFAPLLPFI) threads the bilayer. Over 730–736 (HRFTYHV) the chain is Cytoplasmic. The chain crosses the membrane as a helical span at residues 737–757 (PTFLLLIFIGTLIYNLVAFPF). Topologically, residues 758 to 992 (SPANRLKIFF…VEASHDFIIQ (235 aa)) are vacuolar. N-linked (GlcNAc...) asparagine glycans are attached at residues asparagine 805, asparagine 846, and asparagine 954.

The protein belongs to the peptidase M28 family. Requires Zn(2+) as cofactor.

It is found in the vacuole membrane. In terms of biological role, may be involved in vacuolar sorting and osmoregulation. In Paracoccidioides brasiliensis (strain Pb03), this protein is Vacuolar membrane protease.